Reading from the N-terminus, the 158-residue chain is Transcription elongation factor GreA (158 aa).

The protein belongs to the GreA/GreB family.

Necessary for efficient RNA polymerase transcription elongation past template-encoded arresting sites. The arresting sites in DNA have the property of trapping a certain fraction of elongating RNA polymerases that pass through, resulting in locked ternary complexes. Cleavage of the nascent transcript by cleavage factors such as GreA or GreB allows the resumption of elongation from the new 3'terminus. GreA releases sequences of 2 to 3 nucleotides. In Hamiltonella defensa subsp. Acyrthosiphon pisum (strain 5AT), this protein is Transcription elongation factor GreA.